We begin with the raw amino-acid sequence, 593 residues long: Dihydroxy-acid dehydratase (593 aa).

The span at 1 to 17 (MSQQTEPDDDAALDGDE) shows a compositional bias: acidic residues. Residues 1–40 (MSQQTEPDDDAALDGDEPGAYGKDERLRSREVTEGPERAP) are disordered. The span at 22–40 (GKDERLRSREVTEGPERAP) shows a compositional bias: basic and acidic residues. Residue Cys72 coordinates [2Fe-2S] cluster. Asp104 serves as a coordination point for Mg(2+). [2Fe-2S] cluster is bound at residue Cys145. Mg(2+) contacts are provided by Asp146 and Lys147. Lys147 is modified (N6-carboxylysine). Cys217 serves as a coordination point for [2Fe-2S] cluster. Residue Glu475 participates in Mg(2+) binding. The Proton acceptor role is filled by Ser501.

This sequence belongs to the IlvD/Edd family. Homodimer. The cofactor is [2Fe-2S] cluster. Mg(2+) is required as a cofactor.

It carries out the reaction (2R)-2,3-dihydroxy-3-methylbutanoate = 3-methyl-2-oxobutanoate + H2O. It catalyses the reaction (2R,3R)-2,3-dihydroxy-3-methylpentanoate = (S)-3-methyl-2-oxopentanoate + H2O. Its pathway is amino-acid biosynthesis; L-isoleucine biosynthesis; L-isoleucine from 2-oxobutanoate: step 3/4. It functions in the pathway amino-acid biosynthesis; L-valine biosynthesis; L-valine from pyruvate: step 3/4. Functionally, functions in the biosynthesis of branched-chain amino acids. Catalyzes the dehydration of (2R,3R)-2,3-dihydroxy-3-methylpentanoate (2,3-dihydroxy-3-methylvalerate) into 2-oxo-3-methylpentanoate (2-oxo-3-methylvalerate) and of (2R)-2,3-dihydroxy-3-methylbutanoate (2,3-dihydroxyisovalerate) into 2-oxo-3-methylbutanoate (2-oxoisovalerate), the penultimate precursor to L-isoleucine and L-valine, respectively. In Natronomonas pharaonis (strain ATCC 35678 / DSM 2160 / CIP 103997 / JCM 8858 / NBRC 14720 / NCIMB 2260 / Gabara) (Halobacterium pharaonis), this protein is Dihydroxy-acid dehydratase.